Here is a 513-residue protein sequence, read N- to C-terminus: Interferon alpha/beta receptor 2 (513 aa).

The first 21 residues, Met-1–Ala-21, serve as a signal peptide directing secretion. Over Ser-22 to Ala-242 the chain is Extracellular. 2 disulfide bridges follow: Cys-39/Cys-123 and Cys-85/Cys-93. N-linked (GlcNAc...) asparagine glycans are attached at residues Asn-42, Asn-58, Asn-65, Asn-78, and Asn-84. N-linked (GlcNAc...) asparagine glycosylation is found at Asn-149, Asn-191, and Asn-195. An intrachain disulfide couples Cys-210 to Cys-227. A helical transmembrane segment spans residues Ile-243–Leu-263. The Cytoplasmic segment spans residues Lys-264–Arg-513. The interval Gly-334–Lys-402 is disordered. Residue Tyr-335 is modified to Phosphotyrosine. Residues Pro-344–Ser-354 are compositionally biased toward polar residues. Residues Gly-377 to Gly-389 show a composition bias toward low complexity. A Phosphoserine modification is found at Ser-403. Residues Gly-421–Ser-444 form a mediates interaction with STAT2 (and required for the recruitment of USP18) region. Phosphoserine occurs at positions 448 and 465. The tract at residues Glu-458–Arg-513 is disordered. Tyr-510 is modified (phosphotyrosine).

This sequence belongs to the type II cytokine receptor family. Heterodimer with IFNAR1; forming the receptor for type I interferon. Interacts with the transcriptional factors STAT1 and STAT2. Interacts with JAK1. Interacts with USP18; indirectly via STAT2, it negatively regulates the assembly of the ternary interferon-IFNAR1-IFNAR2 complex and therefore type I interferon signaling. Post-translationally, phosphorylated on tyrosine residues upon interferon binding. Phosphorylation at Tyr-335 or Tyr-510 are sufficient to mediate interferon dependent activation of STAT1, STAT2 and STAT3 leading to antiproliferative effects on many different cell types. Widely expressed. Detected in liver, testis, kidney, salivary gland, thymus, brain, lung and placenta. Isoform 1, isoform 2 and isoform 3 are expressed in brain.

It localises to the cell membrane. Its subcellular location is the secreted. Its function is as follows. Together with IFNAR1, forms the heterodimeric receptor for type I interferons (including interferons alpha, beta, epsilon, omega and kappa). Type I interferon binding activates the JAK-STAT signaling cascade, resulting in transcriptional activation or repression of interferon-regulated genes that encode the effectors of the interferon response. Mechanistically, type I interferon-binding brings the IFNAR1 and IFNAR2 subunits into close proximity with one another, driving their associated Janus kinases (JAKs) (TYK2 bound to IFNAR1 and JAK1 bound to IFNAR2) to cross-phosphorylate one another. The activated kinases phosphorylate specific tyrosine residues on the intracellular domains of IFNAR1 and IFNAR2, forming docking sites for the STAT transcription factors (STAT1, STAT2 and STAT). STAT proteins are then phosphorylated by the JAKs, promoting their translocation into the nucleus to regulate expression of interferon-regulated genes. In terms of biological role, may be potent inhibitors of type I IFN receptor activity. This is Interferon alpha/beta receptor 2 (Ifnar2) from Mus musculus (Mouse).